Reading from the N-terminus, the 257-residue chain is Receptor expression-enhancing protein 4 (257 aa).

Helical transmembrane passes span 1–21 and 42–62; these read MVSW…CPAY and WIVF…ISWF. Residues Ser-152 and Ser-194 each carry the phosphoserine modification. Residues 178 to 257 form a disordered region; that stretch reads PHQRPPIGYR…KKTVPSDMDS (80 aa). Position 196 is a phosphothreonine (Thr-196). Ser-202 bears the Phosphoserine mark. At Thr-250 the chain carries Phosphothreonine. At Ser-253 the chain carries Phosphoserine.

It belongs to the DP1 family.

It is found in the endoplasmic reticulum membrane. Its function is as follows. Microtubule-binding protein required to ensure proper cell division and nuclear envelope reassembly by sequestering the endoplasmic reticulum away from chromosomes during mitosis. Probably acts by clearing the endoplasmic reticulum membrane from metaphase chromosomes. In Pongo abelii (Sumatran orangutan), this protein is Receptor expression-enhancing protein 4 (REEP4).